The following is a 150-amino-acid chain: UPF0506 protein SJCHGC02380 (150 aa).

A signal peptide spans 1-18; the sequence is MNTCIQLLILCLVTVINS. 6 N-linked (GlcNAc...) asparagine glycosylation sites follow: Asn20, Asn24, Asn36, Asn48, Asn52, and Asn110. 3 disulfide bridges follow: Cys116–Cys130, Cys123–Cys134, and Cys129–Cys139.

This sequence belongs to the UPF0506 family.

The protein resides in the secreted. This is UPF0506 protein SJCHGC02380 from Schistosoma japonicum (Blood fluke).